The sequence spans 173 residues: Alpha-crystallin A chain (173 aa).

Met1 bears the N-acetylmethionine mark. The required for complex formation with BFSP1 and BFSP2 stretch occupies residues 1 to 63; the sequence is MDIAIQHPWF…RSVLDSGISE (63 aa). Gln6 carries the deamidated glutamine; partial modification. Residue Ser45 is modified to Phosphoserine. At Gln50 the chain carries Deamidated glutamine; partial. One can recognise a sHSP domain in the interval 52 to 162; the sequence is VFRSVLDSGI…GHSERAIPVS (111 aa). Lys70 and Lys99 each carry N6-acetyllysine. His100 is a Zn(2+) binding site. Deamidated asparagine; partial is present on Asn101. Glu102 and His107 together coordinate Zn(2+). At Ser122 the chain carries Phosphoserine. Deamidated asparagine; partial is present on Asn123. A disordered region spans residues 144–173; that stretch reads PKVPSGVDAGHSERAIPVSREEKPSSAPSS. Positions 153 to 167 are enriched in basic and acidic residues; the sequence is GHSERAIPVSREEKP. A Zn(2+)-binding site is contributed by His154. Residue Ser162 is glycosylated (O-linked (GlcNAc) serine).

This sequence belongs to the small heat shock protein (HSP20) family. In terms of assembly, heteromer composed of three CRYAA and one CRYAB subunits. Inter-subunit bridging via zinc ions enhances stability, which is crucial as there is no protein turn over in the lens. Can also form homodimers and homotetramers (dimers of dimers) which serve as the building blocks of homooligomers. Within homooligomers, the zinc-binding motif is created from residues of 3 different molecules. His-100 and Glu-102 from one molecule are ligands of the zinc ion, and His-107 and His-154 residues from additional molecules complete the site with tetrahedral coordination geometry. Part of a complex required for lens intermediate filament formation composed of BFSP1, BFSP2 and CRYAA. Acetylation at Lys-70 may increase chaperone activity. Post-translationally, undergoes age-dependent proteolytical cleavage at the C-terminus.

It is found in the cytoplasm. Its subcellular location is the nucleus. In terms of biological role, contributes to the transparency and refractive index of the lens. Acts as a chaperone, preventing aggregation of various proteins under a wide range of stress conditions. Required for the correct formation of lens intermediate filaments as part of a complex composed of BFSP1, BFSP2 and CRYAA. This is Alpha-crystallin A chain (CRYAA) from Halichoerus grypus (Gray seal).